We begin with the raw amino-acid sequence, 295 residues long: GTP cyclohydrolase FolE2 (295 aa).

Belongs to the GTP cyclohydrolase IV family.

The catalysed reaction is GTP + H2O = 7,8-dihydroneopterin 3'-triphosphate + formate + H(+). The protein operates within cofactor biosynthesis; 7,8-dihydroneopterin triphosphate biosynthesis; 7,8-dihydroneopterin triphosphate from GTP: step 1/1. Converts GTP to 7,8-dihydroneopterin triphosphate. The chain is GTP cyclohydrolase FolE2 from Pseudomonas putida (strain W619).